Reading from the N-terminus, the 113-residue chain is Large ribosomal subunit protein uL22 (113 aa).

It belongs to the universal ribosomal protein uL22 family. Part of the 50S ribosomal subunit.

In terms of biological role, this protein binds specifically to 23S rRNA; its binding is stimulated by other ribosomal proteins, e.g. L4, L17, and L20. It is important during the early stages of 50S assembly. It makes multiple contacts with different domains of the 23S rRNA in the assembled 50S subunit and ribosome. Functionally, the globular domain of the protein is located near the polypeptide exit tunnel on the outside of the subunit, while an extended beta-hairpin is found that lines the wall of the exit tunnel in the center of the 70S ribosome. This Solibacter usitatus (strain Ellin6076) protein is Large ribosomal subunit protein uL22.